The primary structure comprises 197 residues: Probable adenylyl-sulfate kinase (197 aa).

33-40 (GLSGSGKS) contributes to the ATP binding site. Residue Ser107 is the Phosphoserine intermediate of the active site.

It belongs to the APS kinase family.

It carries out the reaction adenosine 5'-phosphosulfate + ATP = 3'-phosphoadenylyl sulfate + ADP + H(+). The protein operates within sulfur metabolism; hydrogen sulfide biosynthesis; sulfite from sulfate: step 2/3. Functionally, catalyzes the synthesis of activated sulfate. The protein is Probable adenylyl-sulfate kinase (cysC) of Bacillus subtilis (strain 168).